The primary structure comprises 341 residues: Glyceraldehyde-3-phosphate dehydrogenase, cytosolic (341 aa).

NAD(+) contacts are provided by residues 14-15 (RI) and D36. D-glyceraldehyde 3-phosphate-binding positions include 153–155 (SCT), T184, 213–214 (TG), and R236. The active-site Nucleophile is C154. NAD(+) is bound at residue N318.

Belongs to the glyceraldehyde-3-phosphate dehydrogenase family. As to quaternary structure, homotetramer.

The protein localises to the cytoplasm. It catalyses the reaction D-glyceraldehyde 3-phosphate + phosphate + NAD(+) = (2R)-3-phospho-glyceroyl phosphate + NADH + H(+). It participates in carbohydrate degradation; glycolysis; pyruvate from D-glyceraldehyde 3-phosphate: step 1/5. In terms of biological role, key enzyme in glycolysis that catalyzes the first step of the pathway by converting D-glyceraldehyde 3-phosphate (G3P) into 3-phospho-D-glyceroyl phosphate. Essential for the maintenance of cellular ATP levels and carbohydrate metabolism. The polypeptide is Glyceraldehyde-3-phosphate dehydrogenase, cytosolic (GAPC) (Chlamydomonas reinhardtii (Chlamydomonas smithii)).